The chain runs to 512 residues: uncharacterized protein (512 aa).

12 helical membrane-spanning segments follow: residues G25–A45, L55–L75, L96–A116, V123–V143, L148–V168, L183–P203, M238–A258, G263–W283, G294–E314, F329–V349, L359–G379, and A386–L406. Residues Y428–A512 form a disordered region.

The protein localises to the cell membrane. This is an uncharacterized protein from Mycobacterium tuberculosis (strain CDC 1551 / Oshkosh).